We begin with the raw amino-acid sequence, 603 residues long: DNA mismatch repair protein MutL (603 aa).

Belongs to the DNA mismatch repair MutL/HexB family.

This protein is involved in the repair of mismatches in DNA. It is required for dam-dependent methyl-directed DNA mismatch repair. May act as a 'molecular matchmaker', a protein that promotes the formation of a stable complex between two or more DNA-binding proteins in an ATP-dependent manner without itself being part of a final effector complex. In Bradyrhizobium diazoefficiens (strain JCM 10833 / BCRC 13528 / IAM 13628 / NBRC 14792 / USDA 110), this protein is DNA mismatch repair protein MutL.